The sequence spans 390 residues: Methionyl-tRNA formyltransferase, mitochondrial (390 aa).

Residues 1–33 (MRVLLRCCCGHLPVGGGAGRRSNPRWRALARLS) constitute a mitochondrion transit peptide.

Belongs to the Fmt family.

The protein resides in the mitochondrion. It catalyses the reaction L-methionyl-tRNA(fMet) + (6R)-10-formyltetrahydrofolate = N-formyl-L-methionyl-tRNA(fMet) + (6S)-5,6,7,8-tetrahydrofolate + H(+). Methionyl-tRNA formyltransferase that formylates methionyl-tRNA in mitochondria and is crucial for translation initiation. This Bos taurus (Bovine) protein is Methionyl-tRNA formyltransferase, mitochondrial (MTFMT).